The following is a 151-amino-acid chain: Small ribosomal subunit protein uS15 (151 aa).

The interval 1–20 is disordered; it reads MARLHSGKRGSSGSTKPLRT.

The protein belongs to the universal ribosomal protein uS15 family. In terms of assembly, part of the 30S ribosomal subunit.

This is Small ribosomal subunit protein uS15 from Methanococcus vannielii (strain ATCC 35089 / DSM 1224 / JCM 13029 / OCM 148 / SB).